Reading from the N-terminus, the 395-residue chain is Cystathionine beta-lyase (395 aa).

At lysine 210 the chain carries N6-(pyridoxal phosphate)lysine.

This sequence belongs to the trans-sulfuration enzymes family. Homotetramer. Pyridoxal 5'-phosphate is required as a cofactor.

It localises to the cytoplasm. The enzyme catalyses L,L-cystathionine + H2O = L-homocysteine + pyruvate + NH4(+). It catalyses the reaction an S-substituted L-cysteine + H2O = a thiol + pyruvate + NH4(+). It participates in amino-acid biosynthesis; L-methionine biosynthesis via de novo pathway; L-homocysteine from L-cystathionine: step 1/1. Its function is as follows. Catalyzes the cleavage of cystathionine to homocysteine, pyruvate and ammonia during methionine biosynthesis. The chain is Cystathionine beta-lyase (metC) from Salmonella typhimurium (strain LT2 / SGSC1412 / ATCC 700720).